Reading from the N-terminus, the 120-residue chain is Crustacean hyperglycemic hormones 1 (120 aa).

Residues 1–24 (MIAFRAVWSALLASLLLLLLAPSA) form the signal peptide. 3 disulfides stabilise this stretch: Cys53–Cys89, Cys69–Cys85, and Cys72–Cys98. The residue at position 118 (Val118) is a Valine amide.

It belongs to the arthropod CHH/MIH/GIH/VIH hormone family. Produced by the medulla terminalis X-organ in the eyestalks and transported to the sinus gland where they are stored and released.

The protein resides in the secreted. Functionally, hormone found in the sinus gland of isopods and decapods which controls the blood sugar level. Has a secretagogue action over the amylase released from the midgut gland. May act as a stress hormone and may be involved in the control of molting and reproduction. This is Crustacean hyperglycemic hormones 1 from Penaeus japonicus (Kuruma prawn).